Here is a 712-residue protein sequence, read N- to C-terminus: Methylmalonyl-CoA mutase (712 aa).

Substrate is bound by residues 73 to 77 (TVRQY), 183 to 185 (TIQ), R195, K222, H232, and 271 to 273 (RLS). One can recognise a B12-binding domain in the interval 580 to 712 (KPKIMVAKLG…DLIEGKRRNV (133 aa)). An adenosylcob(III)alamin-binding site is contributed by H593.

The protein belongs to the methylmalonyl-CoA mutase family. In terms of assembly, homodimer. Requires adenosylcob(III)alamin as cofactor. A monovalent cation is required as a cofactor.

It catalyses the reaction (R)-methylmalonyl-CoA = succinyl-CoA. Its pathway is metabolic intermediate metabolism; propanoyl-CoA degradation; succinyl-CoA from propanoyl-CoA: step 3/3. In terms of biological role, radical enzyme that catalyzes the transformation of methylmalonyl-CoA to succinyl-CoA. Is required for growth on the polyhydroxyalkanoate degradation pathway intermediates 3-hydroxybutyrate and acetoacetate as sole carbon source. In Rhizobium meliloti (strain 1021) (Ensifer meliloti), this protein is Methylmalonyl-CoA mutase.